The sequence spans 320 residues: Probable arabinan endo-1,5-alpha-L-arabinosidase C (320 aa).

A signal peptide spans 1-16; the sequence is MYRSTLLFLFIALVNA. D31 serves as the catalytic Proton acceptor. N73, N137, and N191 each carry an N-linked (GlcNAc...) asparagine glycan. E199 functions as the Proton donor in the catalytic mechanism.

This sequence belongs to the glycosyl hydrolase 43 family.

It is found in the secreted. It carries out the reaction Endohydrolysis of (1-&gt;5)-alpha-arabinofuranosidic linkages in (1-&gt;5)-arabinans.. The protein operates within glycan metabolism; L-arabinan degradation. Endo-1,5-alpha-L-arabinanase involved in degradation of pectin. Its preferred substrate is linear 1,5-alpha-L-arabinan. The chain is Probable arabinan endo-1,5-alpha-L-arabinosidase C (abnC) from Aspergillus terreus (strain NIH 2624 / FGSC A1156).